The sequence spans 1193 residues: Pyruvate carboxylase (1193 aa).

The Biotin carboxylation domain maps to 41 to 493 (QFQKILVANR…WTTFIDDTPE (453 aa)). Positions 159, 243, and 278 each coordinate ATP. The ATP-grasp domain occupies 163-360 (RQLAIRCNVP…IVAAQIQIAA (198 aa)). The active site involves Arg-335. The region spanning 579–847 (CLIMDTTWRD…DPGLNSAHVR (269 aa)) is the Pyruvate carboxyltransferase domain. Substrate contacts are provided by residues 587 to 591 (RDAHQ) and Arg-660. Residue Asp-588 coordinates a divalent metal cation. Positions 756, 786, and 788 each coordinate a divalent metal cation. Position 756 is an N6-carboxylysine (Lys-756). Thr-921 provides a ligand contact to substrate. A Biotinyl-binding domain is found at 1116–1191 (KADVGDSSQV…DGQDLVCKIT (76 aa)). Lys-1157 is subject to N6-biotinyllysine.

It depends on biotin as a cofactor. Requires Zn(2+) as cofactor.

The protein resides in the cytoplasm. The enzyme catalyses hydrogencarbonate + pyruvate + ATP = oxaloacetate + ADP + phosphate + H(+). Its pathway is carbohydrate biosynthesis; gluconeogenesis. Its function is as follows. Pyruvate carboxylase catalyzes a 2-step reaction, involving the ATP-dependent carboxylation of the covalently attached biotin in the first step and the transfer of the carboxyl group to pyruvate in the second. The protein is Pyruvate carboxylase (pyc) of Aspergillus terreus.